We begin with the raw amino-acid sequence, 118 residues long: Cell division protein FtsB (118 aa).

The Cytoplasmic portion of the chain corresponds to 1–6 (MRNWRW). Residues 7–24 (LLLVLAALLSWLQHRFWF) form a helical membrane-spanning segment. Residues 25–118 (GPGNSGEVRM…DLAQPRREKR (94 aa)) lie on the Periplasmic side of the membrane. A coiled-coil region spans residues 30-66 (GEVRMLQVQIVQQHQENERLRQRNASLAAEVKNLKDG). The disordered stretch occupies residues 97–118 (PLPNDTSADHGVDLAQPRREKR). Residues 103–118 (SADHGVDLAQPRREKR) are compositionally biased toward basic and acidic residues.

This sequence belongs to the FtsB family. Part of a complex composed of FtsB, FtsL and FtsQ.

The protein resides in the cell inner membrane. Essential cell division protein. May link together the upstream cell division proteins, which are predominantly cytoplasmic, with the downstream cell division proteins, which are predominantly periplasmic. The polypeptide is Cell division protein FtsB (Xylella fastidiosa (strain 9a5c)).